A 308-amino-acid polypeptide reads, in one-letter code: Alternaria stem canker resistance protein 1 (308 aa).

The next 6 helical transmembrane spans lie at 21 to 41 (YQDLIFLLFFALFFPVLRFIL), 82 to 102 (FVYFLSTELLALSVTCNEPWF), 128 to 148 (LLYMYAGGFYFYSIFATLYWE), 165 to 185 (VSLIVLSYVYGFARIGSVVLA), 213 to 233 (FSLFALVFTSLRIICYPFWII), and 254 to 274 (IILYFVFNALLICLLVLHLFW). Residues 73-287 (NKFKESAWKF…ILRMVKNQIL (215 aa)) form the TLC domain.

It is found in the endoplasmic reticulum membrane. Its function is as follows. Mediates resistance to sphinganine-analog mycotoxins (SAMs) by restoring the sphingolipid biosynthesis. Could salvage the transport of GPI-anchored proteins from the endoplasmic reticulum to the Golgi apparatus in ceramides-depleted cells after SAM exposure. The polypeptide is Alternaria stem canker resistance protein 1 (Solanum lycopersicum (Tomato)).